Consider the following 362-residue polypeptide: E3 ubiquitin-protein ligase TM129 (362 aa).

Residues 1-6 (MDSPEV) lie on the Lumenal side of the membrane. A helical transmembrane segment spans residues 7 to 27 (TFTLAYLVFAVCFVFTPTEFH). Residues 28 to 56 (SAGLTVQNLLSGWLGSEDAAFVPYHLRRT) lie on the Cytoplasmic side of the membrane. A helical membrane pass occupies residues 57–77 (AATLLCHSLLPLGYYVGMCFA). At 78–94 (ASEKQLYYPSQTPETWR) the chain is on the lumenal side. A helical transmembrane segment spans residues 95–115 (AFLLLALMLPAIACTLIYYWS). Residues 116 to 362 (RDHWACHPLA…FCVLDVCAVR (247 aa)) are Cytoplasmic-facing. Residues 285-350 (CIGCMQTQAS…ASRVPCPTCR (66 aa)) form an RING-type; degenerate zinc finger.

Belongs to the TMEM129 family. In terms of assembly, integral component of ER-resident dislocation complexes.

It is found in the endoplasmic reticulum membrane. The enzyme catalyses S-ubiquitinyl-[E2 ubiquitin-conjugating enzyme]-L-cysteine + [acceptor protein]-L-lysine = [E2 ubiquitin-conjugating enzyme]-L-cysteine + N(6)-ubiquitinyl-[acceptor protein]-L-lysine.. It participates in protein modification; protein ubiquitination. In terms of biological role, E3 ubiquitin-protein ligase involved in ER-associated protein degradation, preferentially associates with the E2 enzyme UBE2J2. Exploited by viral US11 proteins to mediate HLA class I proteins degradation. The sequence is that of E3 ubiquitin-protein ligase TM129 (TMEM129) from Bos taurus (Bovine).